The chain runs to 203 residues: Ribosomal RNA large subunit methyltransferase E (203 aa).

S-adenosyl-L-methionine contacts are provided by glycine 51, tryptophan 53, aspartate 69, aspartate 85, and aspartate 108. The active-site Proton acceptor is lysine 148.

Belongs to the class I-like SAM-binding methyltransferase superfamily. RNA methyltransferase RlmE family.

The protein localises to the cytoplasm. The enzyme catalyses uridine(2552) in 23S rRNA + S-adenosyl-L-methionine = 2'-O-methyluridine(2552) in 23S rRNA + S-adenosyl-L-homocysteine + H(+). Its function is as follows. Specifically methylates the uridine in position 2552 of 23S rRNA at the 2'-O position of the ribose in the fully assembled 50S ribosomal subunit. This Methanocorpusculum labreanum (strain ATCC 43576 / DSM 4855 / Z) protein is Ribosomal RNA large subunit methyltransferase E.